The following is a 144-amino-acid chain: MSRHYEVVFLVHPDQSEQVPAMIERYKSLIEGGNGTIHRLEDWGRRQLAYPIQNLVKAHYVLLNIEVDQAVLSELVESFRFNDAVLRHLVIKRDGPDTEQSLIMKSKDEKGDKPERSERRRRDDEEVDAAPAATDTDGDNAEAA.

The tract at residues 97 to 144 is disordered; the sequence is DTEQSLIMKSKDEKGDKPERSERRRRDDEEVDAAPAATDTDGDNAEAA. Positions 105 to 124 are enriched in basic and acidic residues; that stretch reads KSKDEKGDKPERSERRRRDD.

This sequence belongs to the bacterial ribosomal protein bS6 family.

In terms of biological role, binds together with bS18 to 16S ribosomal RNA. The sequence is that of Small ribosomal subunit protein bS6 from Xanthomonas campestris pv. campestris (strain B100).